The chain runs to 131 residues: Transcription antitermination protein NusB (131 aa).

It belongs to the NusB family.

In terms of biological role, involved in transcription antitermination. Required for transcription of ribosomal RNA (rRNA) genes. Binds specifically to the boxA antiterminator sequence of the ribosomal RNA (rrn) operons. The sequence is that of Transcription antitermination protein NusB from Caldicellulosiruptor saccharolyticus (strain ATCC 43494 / DSM 8903 / Tp8T 6331).